Consider the following 417-residue polypeptide: Serine/threonine-protein kinase SBK1 (417 aa).

The 266-residue stretch at 53–318 (YELVRELGKG…VFRFLKHELT (266 aa)) folds into the Protein kinase domain. Residues 59 to 67 (LGKGTYGKV) and Lys82 each bind ATP. Asp174 functions as the Proton acceptor in the catalytic mechanism. Residues 321–405 (LRRRPSHRAR…TDGRTDKSKG (85 aa)) are disordered. Positions 363–382 (PSPPSVGPVVPVPVPVPVPV) are enriched in pro residues.

It belongs to the protein kinase superfamily. Ser/Thr protein kinase family.

The protein resides in the cytoplasm. It catalyses the reaction L-seryl-[protein] + ATP = O-phospho-L-seryl-[protein] + ADP + H(+). It carries out the reaction L-threonyl-[protein] + ATP = O-phospho-L-threonyl-[protein] + ADP + H(+). Functionally, may be involved in signal-transduction pathways related to the control of brain development. The sequence is that of Serine/threonine-protein kinase SBK1 (Sbk1) from Mus musculus (Mouse).